Here is a 344-residue protein sequence, read N- to C-terminus: Lipase chaperone (344 aa).

Residues 14–34 (AMVYGVVGLAAIAGVAMWSGA) form a helical membrane-spanning segment.

This sequence belongs to the lipase chaperone family.

Its subcellular location is the cell inner membrane. In terms of biological role, may be involved in the folding of the extracellular lipase during its passage through the periplasm. In Burkholderia lata (strain ATCC 17760 / DSM 23089 / LMG 22485 / NCIMB 9086 / R18194 / 383), this protein is Lipase chaperone.